Reading from the N-terminus, the 111-residue chain is Small ribosomal subunit protein bS16 (111 aa).

A disordered region spans residues Glu-92–Glu-111. Over residues Glu-100 to Glu-111 the composition is skewed to acidic residues.

Belongs to the bacterial ribosomal protein bS16 family.

The polypeptide is Small ribosomal subunit protein bS16 (Petrotoga mobilis (strain DSM 10674 / SJ95)).